A 110-amino-acid polypeptide reads, in one-letter code: UPF0060 membrane protein Rpic_4131 (110 aa).

4 consecutive transmembrane segments (helical) span residues valine 8–leucine 28, proline 33–leucine 53, tyrosine 65–leucine 85, and tryptophan 88–glutamine 108.

The protein belongs to the UPF0060 family.

It localises to the cell inner membrane. This Ralstonia pickettii (strain 12J) protein is UPF0060 membrane protein Rpic_4131.